A 340-amino-acid polypeptide reads, in one-letter code: DNA-directed RNA polymerase subunit alpha (340 aa).

An alpha N-terminal domain (alpha-NTD) region spans residues 1–233; the sequence is MIQNEIPIPA…NLFIPLLHEK (233 aa). The alpha C-terminal domain (alpha-CTD) stretch occupies residues 263 to 340; that stretch reads RKEISFKHIF…LPKNKFSIND (78 aa).

It belongs to the RNA polymerase alpha chain family. In plastids the minimal PEP RNA polymerase catalytic core is composed of four subunits: alpha, beta, beta', and beta''. When a (nuclear-encoded) sigma factor is associated with the core the holoenzyme is formed, which can initiate transcription.

It localises to the plastid. The protein resides in the chloroplast. The catalysed reaction is RNA(n) + a ribonucleoside 5'-triphosphate = RNA(n+1) + diphosphate. In terms of biological role, DNA-dependent RNA polymerase catalyzes the transcription of DNA into RNA using the four ribonucleoside triphosphates as substrates. The polypeptide is DNA-directed RNA polymerase subunit alpha (rpoA) (Anthoceros angustus (Hornwort)).